Consider the following 393-residue polypeptide: Phospholipid-transporting ATPase accessory subunit CRF1 (393 aa).

The Cytoplasmic segment spans residues 1–46; that stretch reads MGLILRWKEKKQLSSKQNAQKSRKPANTSFRQQRLKAWQPILSPQS. The chain crosses the membrane as a helical span at residues 47–67; the sequence is VLPLLILMACVFAPIGIGLVV. The Lumenal segment spans residues 68–334; sequence STISVQRLVV…NSIIGAGNEA (267 aa). Residues 70–332 form a confers specificity for binding DNF3 region; it reads ISVQRLVVNY…TTNSIIGAGN (263 aa). N-linked (GlcNAc...) asparagine glycosylation is found at N78, N123, N187, N202, N213, N240, and N291. Disulfide bonds link C82-C126 and C179-C193. A helical membrane pass occupies residues 335-355; sequence LGIVYLIVAGIATLFAILFLI. Residues 356-393 lie on the Cytoplasmic side of the membrane; the sequence is KVIFKPRPMHDHSYLNFENSDTPFDESSVVSIPLREIL.

It belongs to the CDC50/LEM3 family. In terms of assembly, component of a flippase complex consisting of DNF3 and YNR048W/CRF1. Interacts with DNF3; the interaction is direct and required for proper expression and endoplasmic reticulum (ER) export of either partner.

It is found in the golgi apparatus. It localises to the trans-Golgi network membrane. Its function is as follows. Accessory component of a P4-ATPase flippase complex which catalyzes the hydrolysis of ATP coupled to the transport of phosphatidylcholine and small amounts of phosphatidylethanolamine from the lumen to the cytosolic leaflet of the trans-Golgi network and ensures the maintenance of asymmetric distribution of phospholipids. May be involved in transport from early endosomes to the trans-Golgi network (TGN). This Saccharomyces cerevisiae (strain ATCC 204508 / S288c) (Baker's yeast) protein is Phospholipid-transporting ATPase accessory subunit CRF1.